Reading from the N-terminus, the 314-residue chain is Nitrilase 2 (314 aa).

Positions 7–269 (VTLGVAQAAP…ETLITARVST (263 aa)) constitute a CN hydrolase domain. Glu47 serves as the catalytic Proton acceptor. The active-site Proton donor is Lys132. Catalysis depends on Cys166, which acts as the Nucleophile.

The protein belongs to the carbon-nitrogen hydrolase superfamily. Nitrilase family.

It carries out the reaction a nitrile + 2 H2O = a carboxylate + NH4(+). In terms of biological role, nitrilases catalyze the mild hydrolytic conversion of organonitriles directly to the corresponding carboxylic acids. Catalyzes the production of aryllactic acid derivatives. Mediates the hydrolysis of cyanohydrin to (S)-phenyllactic acid. This is Nitrilase 2 from Unknown prokaryotic organism.